Consider the following 337-residue polypeptide: DNA-directed RNA polymerase subunit alpha (337 aa).

The segment at 1-233 (MVREKVRVST…DLFIPFLHAE (233 aa)) is alpha N-terminal domain (alpha-NTD). Residues 267 to 337 (IALKSIFIDQ…KAFHNPFTEE (71 aa)) are alpha C-terminal domain (alpha-CTD).

The protein belongs to the RNA polymerase alpha chain family. As to quaternary structure, in plastids the minimal PEP RNA polymerase catalytic core is composed of four subunits: alpha, beta, beta', and beta''. When a (nuclear-encoded) sigma factor is associated with the core the holoenzyme is formed, which can initiate transcription.

The protein localises to the plastid. The protein resides in the chloroplast. The catalysed reaction is RNA(n) + a ribonucleoside 5'-triphosphate = RNA(n+1) + diphosphate. Functionally, DNA-dependent RNA polymerase catalyzes the transcription of DNA into RNA using the four ribonucleoside triphosphates as substrates. This is DNA-directed RNA polymerase subunit alpha from Eucalyptus globulus subsp. globulus (Tasmanian blue gum).